Here is a 372-residue protein sequence, read N- to C-terminus: Ubiquitin carboxyl-terminal hydrolase 12 (372 aa).

The USP domain maps to 39–371; sequence FGLVNFGNTC…SGYILFYQSR (333 aa). Cys-48 acts as the Nucleophile in catalysis. Residues 150-169 form a disordered region; sequence NGRLANGSLDSQNHNSNAPP. Positions 157 to 166 are enriched in polar residues; the sequence is SLDSQNHNSN. Zn(2+)-binding residues include Cys-188, Cys-191, Cys-235, and Cys-238. His-319 (proton acceptor) is an active-site residue.

This sequence belongs to the peptidase C19 family. USP12/USP46 subfamily. In terms of assembly, interacts with WDR48.

It carries out the reaction Thiol-dependent hydrolysis of ester, thioester, amide, peptide and isopeptide bonds formed by the C-terminal Gly of ubiquitin (a 76-residue protein attached to proteins as an intracellular targeting signal).. Functionally, deubiquitinating enzyme. Has almost no deubiquitinating activity by itself and requires the interaction with wdr48 to have a high activity. The sequence is that of Ubiquitin carboxyl-terminal hydrolase 12 (usp12) from Salmo salar (Atlantic salmon).